A 472-amino-acid chain; its full sequence is 3-isopropylmalate dehydratase large subunit (472 aa).

The [4Fe-4S] cluster site is built by Cys-352, Cys-412, and Cys-415.

Belongs to the aconitase/IPM isomerase family. LeuC type 1 subfamily. Heterodimer of LeuC and LeuD. The cofactor is [4Fe-4S] cluster.

It catalyses the reaction (2R,3S)-3-isopropylmalate = (2S)-2-isopropylmalate. It participates in amino-acid biosynthesis; L-leucine biosynthesis; L-leucine from 3-methyl-2-oxobutanoate: step 2/4. Its function is as follows. Catalyzes the isomerization between 2-isopropylmalate and 3-isopropylmalate, via the formation of 2-isopropylmaleate. This chain is 3-isopropylmalate dehydratase large subunit, found in Roseiflexus castenholzii (strain DSM 13941 / HLO8).